The following is a 182-amino-acid chain: Dihydrofolate reductase (182 aa).

The region spanning 3-180 is the DHFR domain; it reads RFNLIVAVCE…IKFEYKILEK (178 aa). Residues alanine 9 and 15-21 each bind NADP(+); that span reads GIGIRGD. 29–34 contributes to the substrate binding site; it reads ELKYFS. 53-55 lines the NADP(+) pocket; the sequence is RKT. Residue arginine 69 coordinates substrate. Residues 75–77 and 113–120 each bind NADP(+); these read STT and GGSGVYEE.

Belongs to the dihydrofolate reductase family. In terms of assembly, monomer. Interacts with vg.

It catalyses the reaction (6S)-5,6,7,8-tetrahydrofolate + NADP(+) = 7,8-dihydrofolate + NADPH + H(+). It participates in cofactor biosynthesis; tetrahydrofolate biosynthesis; 5,6,7,8-tetrahydrofolate from 7,8-dihydrofolate: step 1/1. In terms of biological role, by interacting with vestigial (vg), may control genes involved in DNA replication. Key enzyme in folate metabolism. Catalyzes an essential reaction for de novo glycine and purine synthesis, and for DNA precursor synthesis. In Drosophila melanogaster (Fruit fly), this protein is Dihydrofolate reductase (Dhfr).